Reading from the N-terminus, the 190-residue chain is GTP cyclohydrolase 1 (190 aa).

The Zn(2+) site is built by Cys-75, His-78, and Cys-146.

This sequence belongs to the GTP cyclohydrolase I family. In terms of assembly, toroid-shaped homodecamer, composed of two pentamers of five dimers.

The catalysed reaction is GTP + H2O = 7,8-dihydroneopterin 3'-triphosphate + formate + H(+). It participates in cofactor biosynthesis; 7,8-dihydroneopterin triphosphate biosynthesis; 7,8-dihydroneopterin triphosphate from GTP: step 1/1. This chain is GTP cyclohydrolase 1, found in Campylobacter jejuni (strain RM1221).